The chain runs to 430 residues: MLFSQITSAILLTAASLSLTTARPVSKQSESKDKLLALPLTSVSRKFSQTKFGQQQLAEKLAGLKPFSEAAADGSVDTPGYYDFDLEEYAIPVSIGTPGQDFLLLFDTGSSDTWVPHKGCTKSEGCVGSRFFDPSASSTFKATNYNLNITYGTGGANGLYFEDSIAIGDITVTKQILAYVDNVRGPTAEQSPNADIFLDGLFGAAYPDNTAMEAEYGSTYNTVHVNLYKQGLISSPLFSVYMNTNSGTGEVVFGGVNNTLLGGDIAYTDVMSRYGGYYFWDAPVTGITVDGSAAVRFSRPQAFTIDTGTNFFIMPSSAASKIVKAALPDATETQQGWVVPCASYQNSKSTISIVMQKSGSSSDTIEISVPVSKMLLPVDQSNETCMFIILPDGGNQYIVGNLFLRFFVNVYDFGNNRIGFAPLASAYENE.

Residues 1–22 (MLFSQITSAILLTAASLSLTTA) form the signal peptide. The propeptide at 23 to 69 (RPVSKQSESKDKLLALPLTSVSRKFSQTKFGQQQLAEKLAGLKPFSE) is activation peptide. One can recognise a Peptidase A1 domain in the interval 89-421 (YAIPVSIGTP…DFGNNRIGFA (333 aa)). Aspartate 107 is a catalytic residue. Cysteine 120 and cysteine 126 are joined by a disulfide. N-linked (GlcNAc...) asparagine glycans are attached at residues asparagine 148 and asparagine 257. Residue aspartate 306 is part of the active site. A disulfide bridge connects residues cysteine 341 and cysteine 385.

Belongs to the peptidase A1 family.

It catalyses the reaction Hydrolysis of proteins, favoring hydrophobic residues at P1 and P1'. Clots milk. Does not accept Lys at P1, and hence does not activate trypsinogen.. This enzyme, capable of clotting milk is frequently used for cheese production. The chain is Mucorpepsin from Rhizomucor miehei.